The sequence spans 429 residues: Histidinol dehydrogenase (429 aa).

NAD(+) is bound by residues Y127, Q188, and N211. 3 residues coordinate substrate: S234, Q256, and H259. Residues Q256 and H259 each contribute to the Zn(2+) site. Catalysis depends on proton acceptor residues E324 and H325. Positions 325, 358, 412, and 417 each coordinate substrate. D358 serves as a coordination point for Zn(2+). H417 serves as a coordination point for Zn(2+).

It belongs to the histidinol dehydrogenase family. Requires Zn(2+) as cofactor.

It carries out the reaction L-histidinol + 2 NAD(+) + H2O = L-histidine + 2 NADH + 3 H(+). It functions in the pathway amino-acid biosynthesis; L-histidine biosynthesis; L-histidine from 5-phospho-alpha-D-ribose 1-diphosphate: step 9/9. Functionally, catalyzes the sequential NAD-dependent oxidations of L-histidinol to L-histidinaldehyde and then to L-histidine. The chain is Histidinol dehydrogenase from Bacillus cereus (strain ATCC 14579 / DSM 31 / CCUG 7414 / JCM 2152 / NBRC 15305 / NCIMB 9373 / NCTC 2599 / NRRL B-3711).